An 863-amino-acid chain; its full sequence is Leucine--tRNA ligase (863 aa).

Residues 40-51 (PYPSGAGLHVGH) carry the 'HIGH' region motif. The 'KMSKS' region motif lies at 635-639 (KMSKS). Lys638 is a binding site for ATP.

The protein belongs to the class-I aminoacyl-tRNA synthetase family.

The protein localises to the cytoplasm. It catalyses the reaction tRNA(Leu) + L-leucine + ATP = L-leucyl-tRNA(Leu) + AMP + diphosphate. The polypeptide is Leucine--tRNA ligase (Leptospira interrogans serogroup Icterohaemorrhagiae serovar copenhageni (strain Fiocruz L1-130)).